Reading from the N-terminus, the 98-residue chain is Putative protein adenylyltransferase MJ0128 (98 aa).

The GSX(10)DXD motif motif lies at 31–45 (GSYARNEQTEKSDID). The Mg(2+) site is built by D43, D45, and D75.

The protein belongs to the MntA antitoxin family. In terms of assembly, probably forms a complex with cognate toxin MJ0127. Requires Mg(2+) as cofactor.

The catalysed reaction is L-tyrosyl-[protein] + ATP = O-(5'-adenylyl)-L-tyrosyl-[protein] + diphosphate. It catalyses the reaction O-(5'-adenylyl)-L-tyrosyl-[protein] + ATP = O-[5'-(adenylyl-(5'-&gt;3')-adenylyl)]-L-tyrosyl-[protein] + diphosphate. Probable antitoxin component of a putative type VII toxin-antitoxin (TA) system. Neutralizes cognate toxic MJ0127 by di-AMPylation. The chain is Putative protein adenylyltransferase MJ0128 from Methanocaldococcus jannaschii (strain ATCC 43067 / DSM 2661 / JAL-1 / JCM 10045 / NBRC 100440) (Methanococcus jannaschii).